Here is a 62-residue protein sequence, read N- to C-terminus: Teretoxin Tan1.1 (62 aa).

Residues 1–21 form the signal peptide; that stretch reads MSCFPVLFVMMLLVSQSVWAF. A propeptide spanning residues 22–38 is cleaved from the precursor; the sequence is PGPETRDGSVQDAESRR.

The protein belongs to the teretoxin A (TA) superfamily. In terms of processing, contains 2 disulfide bonds. In terms of tissue distribution, expressed by the venom duct.

The protein localises to the secreted. In Terebra anilis (Auger snail), this protein is Teretoxin Tan1.1.